The chain runs to 375 residues: DNA replication and repair protein RecF (375 aa).

Residue 30–37 participates in ATP binding; sequence GNNAQGKS.

Belongs to the RecF family.

It localises to the cytoplasm. Functionally, the RecF protein is involved in DNA metabolism; it is required for DNA replication and normal SOS inducibility. RecF binds preferentially to single-stranded, linear DNA. It also seems to bind ATP. The chain is DNA replication and repair protein RecF from Microcystis aeruginosa (strain NIES-843 / IAM M-2473).